The sequence spans 461 residues: FAD-dependent monooxygenase nodY2 (461 aa).

Glu48 and Arg136 together coordinate FAD. The active site involves Arg214. The FAD site is built by Asp338 and Gly351.

This sequence belongs to the paxM FAD-dependent monooxygenase family. It depends on FAD as a cofactor.

It functions in the pathway secondary metabolite biosynthesis. FAD-dependent monooxygenase; part of the gene cluster that mediates the biosynthesis of the indole diterpenes nodulisporic acids (NA). Nodulisporic acid A (NAA) and its chemically modified derivatives are of particular significance because of their highly potent insecticidal activity against blood-feeding arthropods and lack of observable adverse effects on mammals, in particular the tremogenicity associated with the paspaline-derived IDTs is not observed. The geranylgeranyl diphosphate (GGPP) synthase ggs1, localized outside of the cluster, is proposed to catalyze the first step in nodulisporic acid biosynthesis via conversion of farnesyl pyrophosphate and isopentyl pyrophosphate into geranylgeranyl pyrophosphate (GGPP). Condensation of indole-3-glycerol phosphate with GGPP by the prenyl transferase nodC then forms 3-geranylgeranylindole (3-GGI). Epoxidation by the FAD-dependent monooxygenase nodM leads to a single-epoxidized-GGI that is substrate of the terpene cyclase nodB for cyclization to yield emindole SB. The terminal methyl carbon, C28, of emindole SB is then oxidized by the cytochrome P450 monooxygenase nodW to produce nodulisporic acid F (NAF), the pentacyclic core of NAA. NAF is converted to nodulisporic acid E (NAE) via prenylation. This step is probably performed by one of the indole diterpene prenyltransferases nodD1 or nodD2. Several oxidation steps performed by the FAD-linked oxidoreductase nodO and one of the cytochrome P450 monooxygenase nodR, nodX or nodZ further convert NAE to nodulisporic acid D (NAD). NAD is substrate of cytochrome P450 monooxygenase nodJ to produce the precursor of nodulisporic acid C (NAC), converted to NAC by one of the indole diterpene prenyltransferases nodD1 or nodD2. The FAD-dependent monooxygenase nodY2 then oxidizes NAC to nodulisporic acid B (NAB). Finally NAB is converted to NAA by one of the cytochrome P450 monooxygenases nodR, nodX or nodZ. The polypeptide is FAD-dependent monooxygenase nodY2 (Hypoxylon pulicicidum).